Consider the following 546-residue polypeptide: MAAKEIIFSDVARAKLTEGVNILANAVKVTLGPKGRNVVLERSFGAPVVTKDGVSVAKEIELADKLQNIGAQLVKEVASRTSDAAGDGTTTATVLAQAIVREGQKYVAAGLNPLDLKRGIDKAVAAAVDELKKISRPTTTSKEIAQVATISANGEESIGQRIAEAIDRVGKEGVITVEDGKSLADELDVVEGLQFDRGYLSPYFINNPDKQIAEIESPYILLHDKKISNIRDLLPVLEQVAKSGRPLLIIAEDVEGEALATLVVNNIRGILKTVAVKAPGFGDRRKALLEDIAILTGGQVIAEETGLTLEKATLAELGQAKRIEVGKENTTVIDGAGDAKNIEARVKQIRVQIDEATSDYDREKLQERVAKLAGGVAVIKVGGATEIEVKEKKDRVDDALHATRAAVEEGIVPGGGVALIRVRQAIRELQGVNADQNAGIKIVLRALEEPLRQIVTNAGEEASVVVAKVAEGSGNFGYNAQTGVYGDLVESGVLDPTKVTRTALQNAASVAGLLLTTDATVFEAPKDAAPTAAPGGPGAGGPGFDF.

ATP contacts are provided by residues 30 to 33 (TLGP), Lys-51, 87 to 91 (DGTTT), Gly-415, and Asp-495. The interval 527 to 546 (DAAPTAAPGGPGAGGPGFDF) is disordered. A compositionally biased stretch (gly residues) spans 535 to 546 (GGPGAGGPGFDF).

Belongs to the chaperonin (HSP60) family. Forms a cylinder of 14 subunits composed of two heptameric rings stacked back-to-back. Interacts with the co-chaperonin GroES.

Its subcellular location is the cytoplasm. It carries out the reaction ATP + H2O + a folded polypeptide = ADP + phosphate + an unfolded polypeptide.. In terms of biological role, together with its co-chaperonin GroES, plays an essential role in assisting protein folding. The GroEL-GroES system forms a nano-cage that allows encapsulation of the non-native substrate proteins and provides a physical environment optimized to promote and accelerate protein folding. In Burkholderia lata (strain ATCC 17760 / DSM 23089 / LMG 22485 / NCIMB 9086 / R18194 / 383), this protein is Chaperonin GroEL 1.